The sequence spans 220 residues: Inner membrane-spanning protein YciB (220 aa).

6 consecutive transmembrane segments (helical) span residues 20–40, 57–77, 86–106, 123–143, 156–176, and 187–207; these read EVPP…FFFA, IGAP…IALA, LPIM…LTLW, LFGA…GYVF, KLTL…EVVW, and FKVW…MPLI.

The protein belongs to the YciB family.

The protein localises to the cell inner membrane. Plays a role in cell envelope biogenesis, maintenance of cell envelope integrity and membrane homeostasis. This chain is Inner membrane-spanning protein YciB, found in Brucella anthropi (strain ATCC 49188 / DSM 6882 / CCUG 24695 / JCM 21032 / LMG 3331 / NBRC 15819 / NCTC 12168 / Alc 37) (Ochrobactrum anthropi).